Reading from the N-terminus, the 864-residue chain is MKKEYSCKEIERFVQKHWEINDTFKVLEDSKKDKYYCVSMMPYPSGKLHMGHVRNYVLGDVIARYQRMLGKNVLHPIGWDAFGLPAETAAINNKISPEKWTISSIEYMKNQLKLLGCSYDWSREIITCDPKYYKWEQLLFTKLYNKNKAYKKKSIVNWCPKDKTVLANEQVIDNLCWRCSSNIEMKKIFQWFIKITDYADELLNDLNDLKLWPKKVKVMQRNWIGKSKGIDVLFHIKDTNEKILIYVSKLEIFMGITFIVISKEHKLIKFIENKLPSIAKLIKNYNNEKTLELNLRKKTKDGIFTSLFAIHPISKKILPIWISNFFFTNNDIYQSIAAIPAYNKNELDFAKKYNLPIRYVIKDYFEKIIDFKKYNNLKEGILFNSNIFNGLNLKNGYDRISKFLISNKIGKRSTHYKLRDWCISRQRYWGAPIPVLITKENKILVVSENELPVILPKAKNNNIIHSLNSYKDWIYVLNDNKLVKREVDTFDTFMESSWYLHRYTCTKYTKDILDPNATNYWFPVDQYIGGIEHATMHLLYLRFYHKILRDMNFVKCDEPVNRLLCQGMVLSDTFYYFSKSGNKIWTSPKNKNFERNKDNKIINAIDSLGNKLTHIGMSKMSKSKNNGVDPQGIINKYGSDTLRLFIMFAAPPELSLEWSDKGIIGANRFIKKLWKITYNYLNLKKNNNYVFYKKLKEQDNILLEKSFYVINKVTKDIDKNQTFNTAIAEIMKLTNHLNSYINKNEYNNISIIKKVLMIIIRLLYPFIPHVCFVLWNEINKNNDIDKTKWPKIKMPFIKNKKKNIVVQINGKLKTVISFDISCNEFLIKKCVIENNKIKNLLNKKKIKNIIYVKNKIINIVLDDK.

Positions 42 to 52 match the 'HIGH' region motif; it reads PYPSGKLHMGH. The 'KMSKS' region signature appears at 619-623; sequence KMSKS. Lysine 622 serves as a coordination point for ATP.

The protein belongs to the class-I aminoacyl-tRNA synthetase family.

The protein localises to the cytoplasm. The enzyme catalyses tRNA(Leu) + L-leucine + ATP = L-leucyl-tRNA(Leu) + AMP + diphosphate. This is Leucine--tRNA ligase from Wigglesworthia glossinidia brevipalpis.